The primary structure comprises 92 residues: N(2)-fixation sustaining protein CowN (92 aa).

It belongs to the CowN family.

Functionally, is required to sustain N(2)-dependent growth in the presence of low levels of carbon monoxide (CO). Probably acts by protecting the N(2) fixation ability of the nitrogenase complex, which is inactivated in the presence of CO. This chain is N(2)-fixation sustaining protein CowN, found in Rhodopseudomonas palustris (strain BisB18).